Here is a 650-residue protein sequence, read N- to C-terminus: 1-deoxy-D-xylulose-5-phosphate synthase (650 aa).

Thiamine diphosphate-binding positions include His-73 and 114-116; that span reads SHA. Residue Asp-145 participates in Mg(2+) binding. Residues 146 to 147, Asn-174, Tyr-285, and Glu-367 each bind thiamine diphosphate; that span reads GA. Asn-174 contacts Mg(2+). Residues 631-650 form a disordered region; it reads MGDEVGADESNQTPAGGGQA.

It belongs to the transketolase family. DXPS subfamily. Homodimer. The cofactor is Mg(2+). Thiamine diphosphate serves as cofactor.

The enzyme catalyses D-glyceraldehyde 3-phosphate + pyruvate + H(+) = 1-deoxy-D-xylulose 5-phosphate + CO2. The protein operates within metabolic intermediate biosynthesis; 1-deoxy-D-xylulose 5-phosphate biosynthesis; 1-deoxy-D-xylulose 5-phosphate from D-glyceraldehyde 3-phosphate and pyruvate: step 1/1. Its function is as follows. Catalyzes the acyloin condensation reaction between C atoms 2 and 3 of pyruvate and glyceraldehyde 3-phosphate to yield 1-deoxy-D-xylulose-5-phosphate (DXP). This Parafrankia sp. (strain EAN1pec) protein is 1-deoxy-D-xylulose-5-phosphate synthase.